A 105-amino-acid polypeptide reads, in one-letter code: Large ribosomal subunit protein P1 (105 aa).

Met1 is subject to Blocked amino end (Met). Positions 65-76 (VAAPAGQQTQQA) are enriched in low complexity. The tract at residues 65 to 105 (VAAPAGQQTQQAAEKKEEKKEEEKKGPSEEEIGGGLSSLFG) is disordered. Residues 77 to 92 (AEKKEEKKEEEKKGPS) show a composition bias toward basic and acidic residues.

It belongs to the eukaryotic ribosomal protein P1/P2 family. As to quaternary structure, part of the 50S ribosomal subunit. Homodimer, it forms part of the ribosomal stalk which helps the ribosome interact with GTP-bound translation factors. Forms a heptameric uL10/P0(P1)2(P1)2(P1)2 complex, where uL10/P0 forms an elongated spine to which the P1 dimers bind in a sequential fashion.

Forms part of the ribosomal stalk, playing a central role in the interaction of the ribosome with GTP-bound translation factors. The chain is Large ribosomal subunit protein P1 from Sulfolobus acidocaldarius (strain ATCC 33909 / DSM 639 / JCM 8929 / NBRC 15157 / NCIMB 11770).